A 252-amino-acid polypeptide reads, in one-letter code: AA9 family lytic polysaccharide monooxygenase B (252 aa).

The first 20 residues, 1–20 (MVSFTKTFFAIVACALGVQA), serve as a signal peptide directing secretion. The Cu(2+) site is built by His-21 and His-106. Cys-72 and Cys-198 form a disulfide bridge. Asn-158 is a glycosylation site (N-linked (GlcNAc...) asparagine). Positions 184 and 193 each coordinate O2. Tyr-195 provides a ligand contact to Cu(2+). N-linked (GlcNAc...) asparagine glycosylation occurs at Asn-237.

Belongs to the polysaccharide monooxygenase AA9 family. It depends on Cu(2+) as a cofactor.

The protein resides in the secreted. It catalyses the reaction [(1-&gt;4)-beta-D-glucosyl]n+m + reduced acceptor + O2 = 4-dehydro-beta-D-glucosyl-[(1-&gt;4)-beta-D-glucosyl]n-1 + [(1-&gt;4)-beta-D-glucosyl]m + acceptor + H2O.. Its function is as follows. Lytic polysaccharide monooxygenase (LPMO) that depolymerizes crystalline and amorphous polysaccharides via the oxidation of scissile alpha- or beta-(1-4)-glycosidic bonds, yielding C1 or C4 oxidation products. Catalysis by LPMOs requires the reduction of the active-site copper from Cu(II) to Cu(I) by a reducing agent and H(2)O(2) or O(2) as a cosubstrate. The synergistic activity of LPMO9B with xylanase Xyl10G or cellulase Cel5B shows efficient bioconversion rates of 56 and 174 percent in pretreated kenaf (Hibiscus cannabinus) and oak, respectively. The chain is AA9 family lytic polysaccharide monooxygenase B from Gloeophyllum trabeum (strain ATCC 11539 / FP-39264 / Madison 617) (Brown rot fungus).